We begin with the raw amino-acid sequence, 245 residues long: Phycocyanobilin:ferredoxin oxidoreductase (245 aa).

This sequence belongs to the HY2 family.

It catalyses the reaction (2R,3Z)-phycocyanobilin + 4 oxidized [2Fe-2S]-[ferredoxin] = biliverdin IXalpha + 4 reduced [2Fe-2S]-[ferredoxin] + 4 H(+). In terms of biological role, catalyzes the four-electron reduction of biliverdin IX-alpha (2-electron reduction at both the A and D rings); the reaction proceeds via an isolatable 2-electron intermediate, 181,182-dihydrobiliverdin. This Trichodesmium erythraeum (strain IMS101) protein is Phycocyanobilin:ferredoxin oxidoreductase.